The chain runs to 626 residues: 4-hydroxy-3-methylbut-2-en-1-yl diphosphate synthase (flavodoxin) (626 aa).

4 residues coordinate [4Fe-4S] cluster: Cys-521, Cys-524, Cys-555, and Glu-562.

It belongs to the IspG family. [4Fe-4S] cluster serves as cofactor.

The enzyme catalyses (2E)-4-hydroxy-3-methylbut-2-enyl diphosphate + oxidized [flavodoxin] + H2O + 2 H(+) = 2-C-methyl-D-erythritol 2,4-cyclic diphosphate + reduced [flavodoxin]. It functions in the pathway isoprenoid biosynthesis; isopentenyl diphosphate biosynthesis via DXP pathway; isopentenyl diphosphate from 1-deoxy-D-xylulose 5-phosphate: step 5/6. Its function is as follows. Converts 2C-methyl-D-erythritol 2,4-cyclodiphosphate (ME-2,4cPP) into 1-hydroxy-2-methyl-2-(E)-butenyl 4-diphosphate. The chain is 4-hydroxy-3-methylbut-2-en-1-yl diphosphate synthase (flavodoxin) from Bacteroides fragilis (strain ATCC 25285 / DSM 2151 / CCUG 4856 / JCM 11019 / LMG 10263 / NCTC 9343 / Onslow / VPI 2553 / EN-2).